We begin with the raw amino-acid sequence, 555 residues long: Formate--tetrahydrofolate ligase (555 aa).

65–72 (TPAGEGKS) serves as a coordination point for ATP.

It belongs to the formate--tetrahydrofolate ligase family.

The enzyme catalyses (6S)-5,6,7,8-tetrahydrofolate + formate + ATP = (6R)-10-formyltetrahydrofolate + ADP + phosphate. Its pathway is one-carbon metabolism; tetrahydrofolate interconversion. This Staphylococcus aureus (strain bovine RF122 / ET3-1) protein is Formate--tetrahydrofolate ligase.